A 388-amino-acid polypeptide reads, in one-letter code: Succinate--CoA ligase [ADP-forming] subunit beta (388 aa).

The 236-residue stretch at 9–244 (KQLFAEFGLP…PSQEDKREAH (236 aa)) folds into the ATP-grasp domain. ATP-binding positions include Lys-46, 53 to 55 (GRG), Glu-99, Ser-102, and Glu-107. Residues Asn-199 and Asp-213 each coordinate Mg(2+). Substrate-binding positions include Asn-264 and 321–323 (GIV).

This sequence belongs to the succinate/malate CoA ligase beta subunit family. Heterotetramer of two alpha and two beta subunits. Mg(2+) serves as cofactor.

It catalyses the reaction succinate + ATP + CoA = succinyl-CoA + ADP + phosphate. The enzyme catalyses GTP + succinate + CoA = succinyl-CoA + GDP + phosphate. The protein operates within carbohydrate metabolism; tricarboxylic acid cycle; succinate from succinyl-CoA (ligase route): step 1/1. Succinyl-CoA synthetase functions in the citric acid cycle (TCA), coupling the hydrolysis of succinyl-CoA to the synthesis of either ATP or GTP and thus represents the only step of substrate-level phosphorylation in the TCA. The beta subunit provides nucleotide specificity of the enzyme and binds the substrate succinate, while the binding sites for coenzyme A and phosphate are found in the alpha subunit. This chain is Succinate--CoA ligase [ADP-forming] subunit beta, found in Vibrio vulnificus (strain CMCP6).